A 104-amino-acid chain; its full sequence is Large ribosomal subunit protein bL21 (104 aa).

Belongs to the bacterial ribosomal protein bL21 family. As to quaternary structure, part of the 50S ribosomal subunit. Contacts protein L20.

This protein binds to 23S rRNA in the presence of protein L20. The polypeptide is Large ribosomal subunit protein bL21 (Streptococcus sanguinis (strain SK36)).